The following is a 1308-amino-acid chain: D-lysergyl-peptide-synthetase subunit 2 (1308 aa).

Residues 261–658 (EWCRRTPSAV…CRKSTQVKLR (398 aa)) are adenylation (A) domain. Residues 803 to 871 (IEEAFQRFFA…ELSELARHTK (69 aa)) form the Carrier domain. The residue at position 835 (Ser-835) is an O-(pantetheine 4'-phosphoryl)serine. A condensation (C) domain region spans residues 910–1299 (EDVYPCTPLQ…HAAPRTLIGD (390 aa)).

It belongs to the NRP synthetase family.

It functions in the pathway alkaloid biosynthesis; ergot alkaloid biosynthesis. Functionally, D-lysergyl-peptide-synthetase subunit 2; part of the gene cluster that mediates the biosynthesis of fungal ergot alkaloid. DmaW catalyzes the first step of ergot alkaloid biosynthesis by condensing dimethylallyl diphosphate (DMAP) and tryptophan to form 4-dimethylallyl-L-tryptophan. The second step is catalyzed by the methyltransferase easF that methylates 4-dimethylallyl-L-tryptophan in the presence of S-adenosyl-L-methionine, resulting in the formation of 4-dimethylallyl-L-abrine. The catalase easC and the FAD-dependent oxidoreductase easE then transform 4-dimethylallyl-L-abrine to chanoclavine-I which is further oxidized by EasD in the presence of NAD(+), resulting in the formation of chanoclavine-I aldehyde. Agroclavine dehydrogenase easG then mediates the conversion of chanoclavine-I aldehyde to agroclavine via a non-enzymatic adduct reaction: the substrate is an iminium intermediate that is formed spontaneously from chanoclavine-I aldehyde in the presence of glutathione. The presence of easA is not required to complete this reaction. Further conversion of agroclavine to paspalic acid is a two-step process involving oxidation of agroclavine to elymoclavine and of elymoclavine to paspalic acid, the second step being performed by the elymoclavine oxidase cloA. Paspalic acid is then further converted to D-lysergic acid. Ergopeptines are assembled from D-lysergic acid and three different amino acids by the D-lysergyl-peptide-synthetases composed each of a monomudular and a trimodular nonribosomal peptide synthetase subunit. LpsB and lpsC encode the monomodular subunits responsible for D-lysergic acid activation and incorporation into the ergopeptine backbone. LpsA1 and A2 subunits encode the trimodular nonribosomal peptide synthetase assembling the tripeptide portion of ergopeptines. LpsA1 is responsible for formation of the major ergopeptine, ergotamine, and lpsA2 for alpha-ergocryptine, the minor ergopeptine of the total alkaloid mixture elaborated by C.purpurea. D-lysergyl-tripeptides are assembled by the nonribosomal peptide synthetases and released as N-(D-lysergyl-aminoacyl)-lactams. Cyclolization of the D-lysergyl-tripeptides is performed by the Fe(2+)/2-ketoglutarate-dependent dioxygenase easH which introduces a hydroxyl group into N-(D-lysergyl-aminoacyl)-lactam at alpha-C of the aminoacyl residue followed by spontaneous condensation with the terminal lactam carbonyl group. The polypeptide is D-lysergyl-peptide-synthetase subunit 2 (Claviceps purpurea (Ergot fungus)).